The sequence spans 469 residues: IME2-dependent-signaling protein (469 aa).

N-acetylmethionine is present on methionine 1. A Phosphothreonine modification is found at threonine 13. 3 disordered regions span residues lysine 22 to methionine 55, alanine 67 to glutamine 92, and aspartate 117 to threonine 143. Serine 23, serine 27, and serine 39 each carry phosphoserine. Composition is skewed to polar residues over residues serine 25 to glycine 42 and alanine 67 to glutamine 82. Residues serine 122, serine 130, serine 136, serine 147, and serine 148 each carry the phosphoserine modification.

Seems to act indirectly to modify IME2 activity, thus permitting IME2 to carry out later meiotic functions. This is IME2-dependent-signaling protein (IDS2) from Saccharomyces cerevisiae (strain ATCC 204508 / S288c) (Baker's yeast).